Here is a 305-residue protein sequence, read N- to C-terminus: Dihydroorotate dehydrogenase B (NAD(+)), catalytic subunit (305 aa).

FMN-binding positions include Ser-23 and 47–48 (KG). Residues Lys-47 and 71-75 (NAIGL) each bind substrate. FMN contacts are provided by Asn-101 and Asn-129. Asn-129 is a substrate binding site. Cys-132 serves as the catalytic Nucleophile. The FMN site is built by Lys-167 and Ile-193. 194 to 195 (NT) lines the substrate pocket. FMN-binding positions include Gly-219, 245-246 (GG), and 267-268 (GT).

It belongs to the dihydroorotate dehydrogenase family. Type 1 subfamily. In terms of assembly, heterotetramer of 2 PyrK and 2 PyrD type B subunits. Requires FMN as cofactor.

Its subcellular location is the cytoplasm. It carries out the reaction (S)-dihydroorotate + NAD(+) = orotate + NADH + H(+). It participates in pyrimidine metabolism; UMP biosynthesis via de novo pathway; orotate from (S)-dihydroorotate (NAD(+) route): step 1/1. Its function is as follows. Catalyzes the conversion of dihydroorotate to orotate with NAD(+) as electron acceptor. The protein is Dihydroorotate dehydrogenase B (NAD(+)), catalytic subunit (pyrD) of Geobacter metallireducens (strain ATCC 53774 / DSM 7210 / GS-15).